A 229-amino-acid polypeptide reads, in one-letter code: Extracellular small neutral protease (229 aa).

The first 28 residues, 1–28, serve as a signal peptide directing secretion; the sequence is MRMPLSVLTAAGLSLATLGLGTAGPASA. Residues 29–81 constitute a propeptide that is removed on maturation; sequence TPTAEGAPVVAYDGSPSAGSPADAKAEAAANRAFFEAVLRSVAEKRAANPKST. Ca(2+)-binding residues include Asp159 and Thr161. His166 is a binding site for Zn(2+). Glu167 is a catalytic residue. Zn(2+) is bound by residues His170 and Asp176. Cys182 and Cys195 are oxidised to a cystine.

Belongs to the peptidase M7 family. As to quaternary structure, monomer. It depends on Ca(2+) as a cofactor. The cofactor is Zn(2+).

The protein localises to the secreted. The catalysed reaction is Hydrolyzes proteins with a preference for Tyr or Phe in the P1' position. Has no action on amino-acid p-nitroanilides.. Milk hydrolyzing. This is Extracellular small neutral protease (snpA) from Streptomyces sp. (strain C5).